The chain runs to 644 residues: Macrolide export ATP-binding/permease protein MacB (644 aa).

An ABC transporter domain is found at I7–R245. G43–S50 provides a ligand contact to ATP. The next 4 helical transmembrane spans lie at A271–G291, I526–V546, F570–I590, and L607–L627.

This sequence belongs to the ABC transporter superfamily. Macrolide exporter (TC 3.A.1.122) family. Homodimer. Part of the tripartite efflux system MacAB-TolC, which is composed of an inner membrane transporter, MacB, a periplasmic membrane fusion protein, MacA, and an outer membrane component, TolC. The complex forms a large protein conduit and can translocate molecules across both the inner and outer membranes. Interacts with MacA.

The protein localises to the cell inner membrane. Functionally, part of the tripartite efflux system MacAB-TolC. MacB is a non-canonical ABC transporter that contains transmembrane domains (TMD), which form a pore in the inner membrane, and an ATP-binding domain (NBD), which is responsible for energy generation. Confers resistance against macrolides. The protein is Macrolide export ATP-binding/permease protein MacB of Marinobacter nauticus (strain ATCC 700491 / DSM 11845 / VT8) (Marinobacter aquaeolei).